A 178-amino-acid polypeptide reads, in one-letter code: Germinal center-associated signaling and motility protein (178 aa).

The residue at position 99 (Ser-99) is a Phosphoserine. At Tyr-148 the chain carries Phosphotyrosine.

In terms of assembly, interacts with ACTB and MYH2; the interaction with MYH2 is increased by IL6-induced phosphorylation. Interacts (via C-terminus) with ARHGEF11 (via DH domain). Interacts with ARHGEF12. Interacts with SYK; the interaction increases after B-cell receptor stimulation, resulting in enhanced SYK autophosphorylation and activity. In terms of processing, phosphorylation on tyrosine residues can be induced by IL6. Phosphorylation is mediated by LYN. Targeted by the ubiquitin E3 ligase subunit FBXO10 to mediate its ubiquitination and degradation. In terms of tissue distribution, expressed in diffuse large B-cell lymphoma (DLBCL) and several germinal center (GC)-like lymphoma cell lines (at protein level). Highly expressed in normal GC lymphocytes and GC-derived malignancies. Expressed in thymus and spleen.

The protein resides in the cytoplasm. It is found in the cell membrane. Its function is as follows. Involved in the negative regulation of lymphocyte motility. It mediates the migration-inhibitory effects of IL6. Serves as a positive regulator of the RhoA signaling pathway. Enhancement of RhoA activation results in inhibition of lymphocyte and lymphoma cell motility by activation of its downstream effector ROCK. Is a regulator of B-cell receptor signaling, that acts through SYK kinase activation. This is Germinal center-associated signaling and motility protein (GCSAM) from Homo sapiens (Human).